The following is a 579-amino-acid chain: Mitogen-activated protein kinase kinase kinase 7 (579 aa).

Residues 1–300 (MSTASAASSS…FPGADEPLQY (300 aa)) are interaction with MAPK8IP1. One can recognise a Protein kinase domain in the interval 36-291 (IEVEEVVGRG…KIMTHLMRYF (256 aa)). ATP-binding positions include 42 to 50 (VGRGAFGVV) and Lys63. Lys72 participates in a covalent cross-link: Glycyl lysine isopeptide (Lys-Gly) (interchain with G-Cter in ubiquitin). The active-site Proton acceptor is Asp156. Residue Lys158 forms a Glycyl lysine isopeptide (Lys-Gly) (interchain with G-Cter in ubiquitin) linkage. Phosphothreonine; by autocatalysis is present on residues Thr184 and Thr187. Ser192 carries the post-translational modification Phosphoserine; by autocatalysis. Lys209 participates in a covalent cross-link: Glycyl lysine isopeptide (Lys-Gly) (interchain with G-Cter in ubiquitin). 2 disordered regions span residues 301-338 (PCQYSDEGQSNSATSTGSFMDIASTNTSNKSDTNMEQV) and 354-391 (KNQAKQQSESGRLSLGASRGSSVESLPPTSEGKRMSAD). Polar residues predominate over residues 306–338 (DEGQSNSATSTGSFMDIASTNTSNKSDTNMEQV). Over residues 361 to 375 (SESGRLSLGASRGSS) the composition is skewed to low complexity. Ser367, Ser389, and Ser412 each carry phosphoserine. Residues 416 to 425 (LTVTGTEPGQ) show a composition bias toward polar residues. Residues 416-466 (LTVTGTEPGQVSSRSSSPSVRMITTSGPTSEKPARSHPWTPDDSTDTNGSD) are disordered. Low complexity predominate over residues 426-436 (VSSRSSSPSVR). The residue at position 428 (Ser428) is a Phosphoserine.

This sequence belongs to the protein kinase superfamily. STE Ser/Thr protein kinase family. MAP kinase kinase kinase subfamily. Can form homodimer. Binds both upstream activators and downstream substrates in multimolecular complexes. Interacts with TAB1/MAP3K7IP1, TAB2/MAP3K7IP2 and TAB3/MAP3K7IP3. Identified in the TRIKA2 complex composed of MAP3K7/TAK1, TAB1/MAP3K7IP1 and TAB2/MAP3K7IP2. Interacts with PPM1L and PPM1B/PP2CB. Interaction with PP2A and PPP6C leads to its repressed activity. Interacts with TRAF6 and TAB1/MAP3K7IP1; during IL-1 signaling. Interacts with TAOK1 and TAOK2; interaction with TAOK2 interferes with MAP3K7 interaction with IKKA, thus preventing NF-kappa-B activation. Interacts with DYNC2I2 (via WD domains). Interacts with CYLD and RBCK1. Interacts with TGFBR1; induces MAP3K7/TAK1 activation by TRAF6. Interacts with MAPK8IP1 and SMAD6. Interacts with isoform 1 of VRK2. Interacts with DAB2; the interaction is induced by TGF-beta stimulation and may mediate TGF-beta stimulated JNK activation. Interacts with TRIM5. Part of a complex containing ITCH, NDFIP1 and MAP3K7. Interacts with PLEKHM1 (via N- and C-terminus). Interacts with TRIM8. Found in a complex with SH3RF1, RAC2, MAP2K7/MKK7, MAPK8IP1/JIP1, MAPK8/JNK1 and MAPK9/JNK2. Interacts with SASH1. Interacts with RIPK1. The cofactor is Mg(2+). Post-translationally, association with TAB1/MAP3K7IP1 promotes autophosphorylation and subsequent activation. Association with TAB2/MAP3K7IP2, itself associated with free unanchored Lys-63 polyubiquitin chain, promotes autophosphorylation and subsequent activation of MAP3K7. Dephosphorylation at Thr-187 by PP2A and PPP6C leads to inactivation. 'Lys-48'-linked polyubiquitination at Lys-72 is induced by TNFalpha, and leads to proteasomal degradation. Undergoes 'Lys-48'-linked polyubiquitination catalyzed by ITCH. 'Lys-63'-linked polyubiquitination at Lys-158 by TRIM8 does not lead to proteasomal degradation but contributes to autophosphorylation and activation. Deubiquitinated by CYLD, a protease that selectively cleaves 'Lys-63'-linked ubiquitin chains.Deubiquitinated by USP19; leading to negative regulation of TNF-alpha- and IL-1beta-triggered NF-kappa-B activation.

It is found in the cytoplasm. The protein resides in the cell membrane. It catalyses the reaction L-seryl-[protein] + ATP = O-phospho-L-seryl-[protein] + ADP + H(+). It carries out the reaction L-threonyl-[protein] + ATP = O-phospho-L-threonyl-[protein] + ADP + H(+). With respect to regulation, activated by pro-inflammatory cytokines and in response to physical and chemical stresses, including osmotic stress, oxidative stress, arsenic and ultraviolet light irradiation. Activated by 'Lys-63'-linked polyubiquitination and by autophosphorylation. Association with TAB1/MAP3K7IP1 and TAB2/MAP3K7IP2 promotes activation through autophosphorylation, whereas PPM1B/PP2CB, PP2A and PPP6C dephosphorylation leads to inactivation. Ceramides are also able to activate MAP3K7/TAK1. Its function is as follows. Serine/threonine kinase which acts as an essential component of the MAP kinase signal transduction pathway. Plays an important role in the cascades of cellular responses evoked by changes in the environment. Mediates signal transduction of TRAF6, various cytokines including interleukin-1 (IL-1), transforming growth factor-beta (TGFB), TGFB-related factors like BMP2 and BMP4, toll-like receptors (TLR), tumor necrosis factor receptor CD40 and B-cell receptor (BCR). Once activated, acts as an upstream activator of the MKK/JNK signal transduction cascade and the p38 MAPK signal transduction cascade through the phosphorylation and activation of several MAP kinase kinases like MAP2K1/MEK1, MAP2K3/MKK3, MAP2K6/MKK6 and MAP2K7/MKK7. These MAP2Ks in turn activate p38 MAPKs and c-jun N-terminal kinases (JNKs); both p38 MAPK and JNK pathways control the transcription factors activator protein-1 (AP-1). Independently of MAP2Ks and p38 MAPKs, acts as a key activator of NF-kappa-B by promoting activation of the I-kappa-B-kinase (IKK) core complex. Mechanistically, recruited to polyubiquitin chains of RIPK2 and IKBKG/NEMO via TAB2/MAP3K7IP2 and TAB3/MAP3K7IP3, and catalyzes phosphorylation and activation of IKBKB/IKKB component of the IKK complex, leading to NF-kappa-B activation. In osmotic stress signaling, plays a major role in the activation of MAPK8/JNK1, but not that of NF-kappa-B. Promotes TRIM5 capsid-specific restriction activity. Phosphorylates RIPK1 at 'Ser-321' which positively regulates RIPK1 interaction with RIPK3 to promote necroptosis but negatively regulates RIPK1 kinase activity and its interaction with FADD to mediate apoptosis. Phosphorylates STING1 in response to cGAMP-activation, promoting association between STEEP1 and STING1 and STING1 translocation to COPII vesicles. In Mus musculus (Mouse), this protein is Mitogen-activated protein kinase kinase kinase 7 (Map3k7).